The primary structure comprises 366 residues: UPF0329 protein ECU01_0130/ECU01_1480/ECU08_0060 (366 aa).

Residues 325-366 (IRKEEKRIRKEEERAKNEEELLRMVESEEGKSGEGEEGCRRG) are disordered.

The protein belongs to the UPF0329 family.

The sequence is that of UPF0329 protein ECU01_0130/ECU01_1480/ECU08_0060 from Encephalitozoon cuniculi (strain GB-M1) (Microsporidian parasite).